The primary structure comprises 251 residues: MSLLLENLIEEDTIFFAGSISEYDDLQMVIAGAKSKFPRSMLSIFNIVPRTMSKYELELIHNENITGAMFTTMYNIRNNLGLGDDKLTIEAIENYFLDPNNEVMPLIINNTDMTAVIPKKSGRRKNKNMVIFRQGSSPILCIFETRKKINIYKENMESASTEYTPIGDNKALISKYAGINVLNVYSPSTSMRLNAIYGFTNKNKLEKLSTNKELELYSSSPLQEPIRLNDFLGLLECVKKNIPLTDIPTKD.

Residues 1 to 32 (MSLLLENLIEEDTIFFAGSISEYDDLQMVIAG) constitute a propeptide, removed by core protease OPG083.

The protein belongs to the orthopoxvirus OPG098 family. Post-translationally, undergoes morphogenesis-associated proteolysis which cleaves the 28 kDa to a 25-kDa product. Proteolytic cleavage of major core proteins P4a (OPG136), P4b (OPG129), and VP8 (OPG098), which occurs at a late stage of core formation, is required for production of infectious mature virions (MV).

It is found in the virion. The protein localises to the host cytoplasm. In terms of biological role, major core structural protein. The protein is Core protein VP8 (OPG098) of Homo sapiens (Human).